Here is a 652-residue protein sequence, read N- to C-terminus: DNA ligase (652 aa).

NAD(+) contacts are provided by residues 29-33, 78-79, and Glu107; these read DAEYD and SL. Lys109 (N6-AMP-lysine intermediate) is an active-site residue. NAD(+) is bound by residues Arg130, Glu164, Lys278, and Lys302. Cys395, Cys398, Cys413, and Cys418 together coordinate Zn(2+). Residues 577–652 enclose the BRCT domain; sequence DENAALSGMT…IKDEAWLESL (76 aa).

Belongs to the NAD-dependent DNA ligase family. LigA subfamily. It depends on Mg(2+) as a cofactor. Requires Mn(2+) as cofactor.

It catalyses the reaction NAD(+) + (deoxyribonucleotide)n-3'-hydroxyl + 5'-phospho-(deoxyribonucleotide)m = (deoxyribonucleotide)n+m + AMP + beta-nicotinamide D-nucleotide.. DNA ligase that catalyzes the formation of phosphodiester linkages between 5'-phosphoryl and 3'-hydroxyl groups in double-stranded DNA using NAD as a coenzyme and as the energy source for the reaction. It is essential for DNA replication and repair of damaged DNA. This Streptococcus suis (strain 05ZYH33) protein is DNA ligase.